Here is a 300-residue protein sequence, read N- to C-terminus: 3-methyl-2-oxobutanoate hydroxymethyltransferase (300 aa).

Mg(2+)-binding residues include D75 and D118. 3-methyl-2-oxobutanoate-binding positions include 75–76 (DS), D118, and K147. Position 149 (E149) interacts with Mg(2+). E216 (proton acceptor) is an active-site residue.

It belongs to the PanB family. In terms of assembly, homodecamer; pentamer of dimers. Mg(2+) is required as a cofactor.

The protein resides in the cytoplasm. It catalyses the reaction 3-methyl-2-oxobutanoate + (6R)-5,10-methylene-5,6,7,8-tetrahydrofolate + H2O = 2-dehydropantoate + (6S)-5,6,7,8-tetrahydrofolate. Its pathway is cofactor biosynthesis; (R)-pantothenate biosynthesis; (R)-pantoate from 3-methyl-2-oxobutanoate: step 1/2. In terms of biological role, catalyzes the reversible reaction in which hydroxymethyl group from 5,10-methylenetetrahydrofolate is transferred onto alpha-ketoisovalerate to form ketopantoate. The sequence is that of 3-methyl-2-oxobutanoate hydroxymethyltransferase from Verminephrobacter eiseniae (strain EF01-2).